Here is a 118-residue protein sequence, read N- to C-terminus: Large ribosomal subunit protein bL20 (118 aa).

Belongs to the bacterial ribosomal protein bL20 family.

In terms of biological role, binds directly to 23S ribosomal RNA and is necessary for the in vitro assembly process of the 50S ribosomal subunit. It is not involved in the protein synthesizing functions of that subunit. The chain is Large ribosomal subunit protein bL20 from Pseudomonas fluorescens (strain ATCC BAA-477 / NRRL B-23932 / Pf-5).